Consider the following 509-residue polypeptide: tRNA (guanine(37)-N(1))-methyltransferase (509 aa).

Residues Met1 to Phe57 constitute a mitochondrion transit peptide. S-adenosyl-L-methionine-binding positions include His289, Asp327–Leu328, Asp355–Gly356, and Asn387. The segment at Thr478 to Thr509 is disordered.

Belongs to the class I-like SAM-binding methyltransferase superfamily. TRM5/TYW2 family. In terms of assembly, monomer.

Its subcellular location is the mitochondrion matrix. It is found in the nucleus. The protein localises to the cytoplasm. It carries out the reaction guanosine(37) in tRNA + S-adenosyl-L-methionine = N(1)-methylguanosine(37) in tRNA + S-adenosyl-L-homocysteine + H(+). Involved in mitochondrial tRNA methylation. Specifically methylates the N1 position of guanosine-37 in various tRNAs. Methylation is not dependent on the nature of the nucleoside 5' of the target nucleoside. This is the first step in the biosynthesis of wybutosine (yW), a modified base adjacent to the anticodon of tRNAs and required for accurate decoding. This Macaca mulatta (Rhesus macaque) protein is tRNA (guanine(37)-N(1))-methyltransferase.